Consider the following 278-residue polypeptide: Large ribosomal subunit protein uL2 (278 aa).

Disordered regions lie at residues 29–55 (PEKSLVRPLHSKGGRNNAGRITVRHQG) and 225–278 (VMNP…NKKR). The segment covering 258-278 (RSNKKASNKYIVRRRTKNKKR) has biased composition (basic residues).

The protein belongs to the universal ribosomal protein uL2 family. As to quaternary structure, part of the 50S ribosomal subunit. Forms a bridge to the 30S subunit in the 70S ribosome. The N-terminus is blocked. In terms of processing, phosphorylated on serine and threonine residues.

In terms of biological role, one of the primary rRNA binding proteins. Required for association of the 30S and 50S subunits to form the 70S ribosome, for tRNA binding and peptide bond formation. It has been suggested to have peptidyltransferase activity; this is somewhat controversial. Makes several contacts with the 16S rRNA in the 70S ribosome. The chain is Large ribosomal subunit protein uL2 from Streptomyces collinus.